The primary structure comprises 347 residues: Protein RecA (347 aa).

67–74 (GPESSGKT) contacts ATP.

This sequence belongs to the RecA family.

The protein localises to the cytoplasm. Its function is as follows. Can catalyze the hydrolysis of ATP in the presence of single-stranded DNA, the ATP-dependent uptake of single-stranded DNA by duplex DNA, and the ATP-dependent hybridization of homologous single-stranded DNAs. It interacts with LexA causing its activation and leading to its autocatalytic cleavage. This is Protein RecA from Sulfurovum sp. (strain NBC37-1).